The following is a 363-amino-acid chain: Flagellar P-ring protein (363 aa).

Positions 1–20 (MKCKLIFAVFMLAFSMPSQA) are cleaved as a signal peptide.

This sequence belongs to the FlgI family. The basal body constitutes a major portion of the flagellar organelle and consists of four rings (L,P,S, and M) mounted on a central rod.

It localises to the periplasm. The protein resides in the bacterial flagellum basal body. Its function is as follows. Assembles around the rod to form the L-ring and probably protects the motor/basal body from shearing forces during rotation. In Shewanella oneidensis (strain ATCC 700550 / JCM 31522 / CIP 106686 / LMG 19005 / NCIMB 14063 / MR-1), this protein is Flagellar P-ring protein.